The primary structure comprises 633 residues: MEKYDYSELGLKAGLEIHQQLDSKEKLFCRCPTLIRDVKESDFEFFRYLRATESEMGEKDRAAVEQTKIRRKYIYKAYDTTCLIENDEEPPRELNKEALDISLGIAKLFNMKPVDQMHVMRKIVVDGSNTSGFQRTAFLASDGFIETSQGLCGIDSLCVEEEAAQKIEEIGDSIIYSLDRLGIPLVEIATAPDIKSPRHAREVAEQIGMFLRSTGKVKRGLGTIRQDVNVSIAEGARVEIKGVQALDLIEDIIRREVERQLNLLFIRQELIERKAFVCEEIYDITGLFVDTKSKVLQKGVKKGAVLAAHLKKFEGLVGKEVQPGRRLGTEFSDRAKTAGVGGIFHTDELPNYGITEKEVKTVRDAIGASAGDAVIMVADEPEKARLAIEAVIQRAKEAMEGIPEETRKALPDGNTAYMRPLPGAARMYPETDVPQIEISQEYFDSIEIPELLTERAKRFVSENGLNQELAEKIAYSKHLPLFEELIETYGKDENVNSTLIARTLVGIVPEIRRNGVETENLTDEHFKGLFVAISNQEIAKEAIQDLLAALAEEPELSTPEAISNLGLSAFDPEEVENFIKKTVREREDFIKEKGPAALGPLMGIVMKEYRGTVDGKILSQMLKKELDSFINQG.

This sequence belongs to the GatB/GatE family. GatE subfamily. As to quaternary structure, heterodimer of GatD and GatE.

It carries out the reaction L-glutamyl-tRNA(Gln) + L-glutamine + ATP + H2O = L-glutaminyl-tRNA(Gln) + L-glutamate + ADP + phosphate + H(+). Functionally, allows the formation of correctly charged Gln-tRNA(Gln) through the transamidation of misacylated Glu-tRNA(Gln) in organisms which lack glutaminyl-tRNA synthetase. The reaction takes place in the presence of glutamine and ATP through an activated gamma-phospho-Glu-tRNA(Gln). The GatDE system is specific for glutamate and does not act on aspartate. This Methanosarcina barkeri (strain Fusaro / DSM 804) protein is Glutamyl-tRNA(Gln) amidotransferase subunit E.